A 707-amino-acid polypeptide reads, in one-letter code: Trans-feruloyl-CoA synthase FCS1 (707 aa).

ATP contacts are provided by residues histidine 267 and 524–535 (ARAIGYPVVMKA). One can recognise an ATP-grasp domain in the interval 498–549 (KELLRPLGIAFPPSQFAANAEAAAAAARAIGYPVVMKAQAAALGHKSDAGGV).

The protein in the N-terminal section; belongs to the acetate CoA ligase alpha subunit family. In the C-terminal section; belongs to the acetate CoA ligase beta subunit family. As to quaternary structure, homodimer.

The enzyme catalyses (E)-ferulate + ATP + CoA = (E)-feruloyl-CoA + ADP + phosphate. Its function is as follows. Catalyzes the formation of feruloyl-CoA, ADP and phosphate from ferulate, CoA and ATP. The protein is Trans-feruloyl-CoA synthase FCS1 of Unknown prokaryotic organism.